The following is a 282-amino-acid chain: Pantothenate synthetase (282 aa).

30–37 lines the ATP pocket; it reads MGALHAGH. The active-site Proton donor is His-37. Gln-61 lines the (R)-pantoate pocket. Gln-61 is a beta-alanine binding site. Residue 147–150 coordinates ATP; sequence GEKD. Gln-153 contributes to the (R)-pantoate binding site. Residues Val-177 and 185-188 each bind ATP; that span reads LSSR.

This sequence belongs to the pantothenate synthetase family. In terms of assembly, homodimer.

The protein localises to the cytoplasm. It carries out the reaction (R)-pantoate + beta-alanine + ATP = (R)-pantothenate + AMP + diphosphate + H(+). It functions in the pathway cofactor biosynthesis; (R)-pantothenate biosynthesis; (R)-pantothenate from (R)-pantoate and beta-alanine: step 1/1. In terms of biological role, catalyzes the condensation of pantoate with beta-alanine in an ATP-dependent reaction via a pantoyl-adenylate intermediate. The chain is Pantothenate synthetase from Phocaeicola vulgatus (strain ATCC 8482 / DSM 1447 / JCM 5826 / CCUG 4940 / NBRC 14291 / NCTC 11154) (Bacteroides vulgatus).